A 316-amino-acid polypeptide reads, in one-letter code: D-alanine--D-alanine ligase (316 aa).

Residues 129–316 form the ATP-grasp domain; it reads KYILQAAGIP…ALQAEFCRYP (188 aa). An ATP-binding site is contributed by 162 to 217; sequence EGSLLYPMFIKPANMGSSVGITKAENREELQNALQEAYRYDTRAIVEQGIEAREIE. Mg(2+) contacts are provided by D288, E301, and N303.

Belongs to the D-alanine--D-alanine ligase family. Mg(2+) serves as cofactor. Mn(2+) is required as a cofactor.

It localises to the cytoplasm. It catalyses the reaction 2 D-alanine + ATP = D-alanyl-D-alanine + ADP + phosphate + H(+). It participates in cell wall biogenesis; peptidoglycan biosynthesis. Its function is as follows. Cell wall formation. This chain is D-alanine--D-alanine ligase (ddl), found in Enterococcus gallinarum.